Here is a 456-residue protein sequence, read N- to C-terminus: Dual-specificity RNA methyltransferase RlmN (456 aa).

The tract at residues 1 to 21 is disordered; it reads MIQRHLGQPRLIQNGGDAGGV. The Proton acceptor role is filled by glutamate 175. A Radical SAM core domain is found at 183 to 416; it reads DEERGAVCIS…QDAGYSAPIR (234 aa). Cysteine 190 and cysteine 427 are joined by a disulfide. 3 residues coordinate [4Fe-4S] cluster: cysteine 197, cysteine 201, and cysteine 204. S-adenosyl-L-methionine contacts are provided by residues 253–254, serine 285, 307–309, and asparagine 384; these read GE and SLH. Cysteine 427 functions as the S-methylcysteine intermediate in the catalytic mechanism.

Belongs to the radical SAM superfamily. RlmN family. [4Fe-4S] cluster serves as cofactor.

Its subcellular location is the cytoplasm. The catalysed reaction is adenosine(2503) in 23S rRNA + 2 reduced [2Fe-2S]-[ferredoxin] + 2 S-adenosyl-L-methionine = 2-methyladenosine(2503) in 23S rRNA + 5'-deoxyadenosine + L-methionine + 2 oxidized [2Fe-2S]-[ferredoxin] + S-adenosyl-L-homocysteine. The enzyme catalyses adenosine(37) in tRNA + 2 reduced [2Fe-2S]-[ferredoxin] + 2 S-adenosyl-L-methionine = 2-methyladenosine(37) in tRNA + 5'-deoxyadenosine + L-methionine + 2 oxidized [2Fe-2S]-[ferredoxin] + S-adenosyl-L-homocysteine. Its function is as follows. Specifically methylates position 2 of adenine 2503 in 23S rRNA and position 2 of adenine 37 in tRNAs. m2A2503 modification seems to play a crucial role in the proofreading step occurring at the peptidyl transferase center and thus would serve to optimize ribosomal fidelity. This Paramagnetospirillum magneticum (strain ATCC 700264 / AMB-1) (Magnetospirillum magneticum) protein is Dual-specificity RNA methyltransferase RlmN.